Consider the following 92-residue polypeptide: RIIa domain-containing protein 1 (92 aa).

The 35-residue stretch at 43 to 77 folds into the RIIa domain; it reads KEVEWLISGFFREIFLKRPDNILEFAADYFTDPRL.

This is RIIa domain-containing protein 1 (RIIAD1) from Homo sapiens (Human).